Consider the following 287-residue polypeptide: 4-hydroxybenzoate octaprenyltransferase (287 aa).

The next 5 helical transmembrane spans lie at 20 to 38, 95 to 115, 211 to 231, 235 to 255, and 266 to 286; these read IGTL…FAAG, IVFL…NPLV, IIAA…LIAE, IYGG…KLIF, and FLNN…DYLV.

It belongs to the UbiA prenyltransferase family. It depends on Mg(2+) as a cofactor.

It is found in the cell inner membrane. It carries out the reaction all-trans-octaprenyl diphosphate + 4-hydroxybenzoate = 4-hydroxy-3-(all-trans-octaprenyl)benzoate + diphosphate. It participates in cofactor biosynthesis; ubiquinone biosynthesis. Catalyzes the prenylation of para-hydroxybenzoate (PHB) with an all-trans polyprenyl group. Mediates the second step in the final reaction sequence of ubiquinone-8 (UQ-8) biosynthesis, which is the condensation of the polyisoprenoid side chain with PHB, generating the first membrane-bound Q intermediate 3-octaprenyl-4-hydroxybenzoate. The protein is 4-hydroxybenzoate octaprenyltransferase of Shewanella piezotolerans (strain WP3 / JCM 13877).